Reading from the N-terminus, the 290-residue chain is Ribosomal RNA small subunit methyltransferase A (290 aa).

6 residues coordinate S-adenosyl-L-methionine: Asn27, Leu29, Gly54, Glu75, Asp100, and Asn125.

This sequence belongs to the class I-like SAM-binding methyltransferase superfamily. rRNA adenine N(6)-methyltransferase family. RsmA subfamily.

The protein resides in the cytoplasm. It catalyses the reaction adenosine(1518)/adenosine(1519) in 16S rRNA + 4 S-adenosyl-L-methionine = N(6)-dimethyladenosine(1518)/N(6)-dimethyladenosine(1519) in 16S rRNA + 4 S-adenosyl-L-homocysteine + 4 H(+). Its function is as follows. Specifically dimethylates two adjacent adenosines (A1518 and A1519) in the loop of a conserved hairpin near the 3'-end of 16S rRNA in the 30S particle. May play a critical role in biogenesis of 30S subunits. This is Ribosomal RNA small subunit methyltransferase A from Streptococcus sanguinis (strain SK36).